The primary structure comprises 518 residues: Beta-secretase 2 (518 aa).

The signal sequence occupies residues 1 to 20; it reads MGALARALLLPLLAQWLLRA. Positions 21–62 are excised as a propeptide; sequence APELAPAPFTLPLRVAAATNRVVAPTPGPGTPAERHADGLAL. Over 21-473 the chain is Extracellular; that stretch reads APELAPAPFT…SEPILWIVSY (453 aa). Positions 92–429 constitute a Peptidase A1 domain; it reads YYLEMLIGTP…DRAQKRVGFA (338 aa). Asp-110 is a catalytic residue. N-linked (GlcNAc...) asparagine glycosylation occurs at Asn-170. Disulfide bonds link Cys-233/Cys-433, Cys-292/Cys-457, and Cys-344/Cys-393. Residue Asp-303 is part of the active site. Asn-366 carries an N-linked (GlcNAc...) asparagine glycan. A helical membrane pass occupies residues 474–494; that stretch reads ALMSVCGAILLVLIVLLLLPF. Residues 495–518 are Cytoplasmic-facing; that stretch reads RCQRRPRDPEVVNDESSLVRHRWK.

The protein belongs to the peptidase A1 family. Monomer. Interacts with RTN3 and RTN4. In terms of processing, undergoes autoproteolytic cleavage. Post-translationally, glycosylated. In terms of tissue distribution, brain. Present in neurons within the hippocampus, frontal cortex and temporal cortex (at protein level). Expressed at low levels in most peripheral tissues and at higher levels in colon, kidney, pancreas, placenta, prostate, stomach and trachea. Expressed at low levels in the brain. Found in spinal cord, medulla oblongata, substantia nigra and locus coruleus. Expressed in the ductal epithelium of both normal and malignant prostate.

It localises to the cell membrane. The protein localises to the golgi apparatus. Its subcellular location is the endoplasmic reticulum. The protein resides in the endosome. It is found in the melanosome. The enzyme catalyses Broad endopeptidase specificity. Cleaves Glu-Val-Asn-Leu-|-Asp-Ala-Glu-Phe in the Swedish variant of Alzheimer's amyloid precursor protein.. Responsible for the proteolytic processing of the amyloid precursor protein (APP). Cleaves APP, between residues 690 and 691, leading to the generation and extracellular release of beta-cleaved soluble APP, and a corresponding cell-associated C-terminal fragment which is later released by gamma-secretase. It has also been shown that it can cleave APP between residues 671 and 672. Involved in the proteolytic shedding of PMEL at early stages of melanosome biogenesis. Cleaves PMEL within the M-beta fragment to release the amyloidogenic PMEL luminal fragment containing M-alpha and a small portion of M-beta N-terminus. This is a prerequisite step for subsequent processing and assembly of PMEL fibrils into amyloid sheets. Responsible also for the proteolytic processing of CLTRN in pancreatic beta cells. The polypeptide is Beta-secretase 2 (BACE2) (Homo sapiens (Human)).